The following is a 132-amino-acid chain: uncharacterized protein (132 aa).

Disordered stretches follow at residues 36-69 and 97-132; these read GLAS…PNIS and QIND…PTAR. At serine 101 the chain carries Phosphoserine.

Copurifies with proteins HOL1, MMP1, PEX7 and PLB1.

This is an uncharacterized protein from Saccharomyces cerevisiae (strain ATCC 204508 / S288c) (Baker's yeast).